Reading from the N-terminus, the 87-residue chain is Putative sodium channel toxin Ts40 (87 aa).

Residues 1–19 (MTALFYLLFLTSVIIETHQ) form the signal peptide. 3 disulfide bridges follow: Cys-41/Cys-63, Cys-47/Cys-68, and Cys-51/Cys-70.

The protein belongs to the long (4 C-C) scorpion toxin superfamily. Sodium channel inhibitor family. Expressed by the venom gland.

The protein resides in the secreted. Functionally, putative sodium channel toxin. This is Putative sodium channel toxin Ts40 from Tityus serrulatus (Brazilian scorpion).